The following is a 243-amino-acid chain: Fibroblast growth factor 12 (243 aa).

2 disordered regions span residues 1-39 and 216-243; these read MAAA…DGRS and IGEK…QDST. A Bipartite nuclear localization signal motif is present at residues 11-38; it reads RQKRQARESNSDRVSASKRRSSPSKDGR.

This sequence belongs to the heparin-binding growth factors family. As to quaternary structure, interacts with the C-terminal region of SCN9A. As to expression, brain, eye and testis; highly expressed in embryonic retina, olfactory epithelium, olfactory bulb, and in a segmental pattern of the body wall; in adult olfactory bulb, less in cerebellum, deep cerebellar nuclei, cortex and multiple midbrain structures.

It is found in the nucleus. Functionally, involved in nervous system development and function. Involved in the positive regulation of voltage-gated sodium channel activity. Promotes neuronal excitability by elevating the voltage dependence of neuronal sodium channel SCN8A fast inactivation. In Homo sapiens (Human), this protein is Fibroblast growth factor 12 (FGF12).